A 273-amino-acid chain; its full sequence is Dermonecrotic toxin LruSicTox-alphaIC1b (273 aa).

The active site involves His5. 2 residues coordinate Mg(2+): Glu25 and Asp27. The active-site Nucleophile is His41. 2 disulfides stabilise this stretch: Cys45/Cys51 and Cys47/Cys190. Asp85 serves as a coordination point for Mg(2+).

This sequence belongs to the arthropod phospholipase D family. Class II subfamily. Mg(2+) serves as cofactor. As to expression, expressed by the venom gland.

The protein localises to the secreted. The enzyme catalyses an N-(acyl)-sphingosylphosphocholine = an N-(acyl)-sphingosyl-1,3-cyclic phosphate + choline. It catalyses the reaction an N-(acyl)-sphingosylphosphoethanolamine = an N-(acyl)-sphingosyl-1,3-cyclic phosphate + ethanolamine. It carries out the reaction a 1-acyl-sn-glycero-3-phosphocholine = a 1-acyl-sn-glycero-2,3-cyclic phosphate + choline. The catalysed reaction is a 1-acyl-sn-glycero-3-phosphoethanolamine = a 1-acyl-sn-glycero-2,3-cyclic phosphate + ethanolamine. Functionally, dermonecrotic toxins cleave the phosphodiester linkage between the phosphate and headgroup of certain phospholipids (sphingolipid and lysolipid substrates), forming an alcohol (often choline) and a cyclic phosphate. This toxin acts on sphingomyelin (SM). It may also act on ceramide phosphoethanolamine (CPE), lysophosphatidylcholine (LPC) and lysophosphatidylethanolamine (LPE), but not on lysophosphatidylserine (LPS), and lysophosphatidylglycerol (LPG). It acts by transphosphatidylation, releasing exclusively cyclic phosphate products as second products. Induces dermonecrosis, hemolysis, increased vascular permeability, edema, inflammatory response, and platelet aggregation. The polypeptide is Dermonecrotic toxin LruSicTox-alphaIC1b (Loxosceles rufescens (Mediterranean recluse spider)).